The primary structure comprises 476 residues: Glycogen synthase (476 aa).

Lys-15 contributes to the ADP-alpha-D-glucose binding site.

This sequence belongs to the glycosyltransferase 1 family. Bacterial/plant glycogen synthase subfamily.

It catalyses the reaction [(1-&gt;4)-alpha-D-glucosyl](n) + ADP-alpha-D-glucose = [(1-&gt;4)-alpha-D-glucosyl](n+1) + ADP + H(+). The protein operates within glycan biosynthesis; glycogen biosynthesis. Functionally, synthesizes alpha-1,4-glucan chains using ADP-glucose. The chain is Glycogen synthase from Streptococcus sanguinis (strain SK36).